The primary structure comprises 384 residues: Proteinase K (384 aa).

Residues 1–15 (MRLSVLLSLLPLALG) form the signal peptide. The propeptide occupies 16 to 105 (APAVEQRSEA…IEQDAVVTIN (90 aa)). Residues 39–104 (KYIVKFKEGS…YIEQDAVVTI (66 aa)) enclose the Inhibitor I9 domain. One can recognise a Peptidase S8 domain in the interval 112 to 384 (PWGLARISST…NLLAYNNYQA (273 aa)). A Ca(2+)-binding site is contributed by Thr121. Cys139 and Cys228 are joined by a disulfide. Active-site charge relay system residues include Asp144 and His174. Pro280, Val282, and Asp305 together coordinate Ca(2+). Cys283 and Cys354 are joined by a disulfide. Ser329 serves as the catalytic Charge relay system. Asp365 contributes to the Ca(2+) binding site.

This sequence belongs to the peptidase S8 family. Ca(2+) serves as cofactor.

The enzyme catalyses Hydrolysis of keratin, and of other proteins with subtilisin-like specificity. Hydrolyzes peptide amides.. In terms of biological role, hydrolyzes keratin at aromatic and hydrophobic residues. This chain is Proteinase K (PROK), found in Parengyodontium album (Tritirachium album).